Reading from the N-terminus, the 743-residue chain is 1,4-alpha-glucan branching enzyme GlgB (743 aa).

D416 serves as the catalytic Nucleophile. E469 (proton donor) is an active-site residue.

Belongs to the glycosyl hydrolase 13 family. GlgB subfamily. Monomer.

The catalysed reaction is Transfers a segment of a (1-&gt;4)-alpha-D-glucan chain to a primary hydroxy group in a similar glucan chain.. It participates in glycan biosynthesis; glycogen biosynthesis. Functionally, catalyzes the formation of the alpha-1,6-glucosidic linkages in glycogen by scission of a 1,4-alpha-linked oligosaccharide from growing alpha-1,4-glucan chains and the subsequent attachment of the oligosaccharide to the alpha-1,6 position. This is 1,4-alpha-glucan branching enzyme GlgB from Shewanella baltica (strain OS155 / ATCC BAA-1091).